The chain runs to 195 residues: Antigenic thaumatin-like protein ARB_01183 (195 aa).

The N-terminal stretch at 1-22 (MHSNTAVIALSALAALVPAALA) is a signal peptide. 2 disulfide bridges follow: Cys125–Cys153 and Cys130–Cys137. A disordered region spans residues 171–195 (GPKKMFKPVQEKAANRPRHPHARPE). Over residues 185–195 (NRPRHPHARPE) the composition is skewed to basic residues.

The protein belongs to the thaumatin family.

The protein resides in the secreted. In terms of biological role, might be involved in the inhibition of growth of fungal competitors and pathogenicity. The chain is Antigenic thaumatin-like protein ARB_01183 from Arthroderma benhamiae (strain ATCC MYA-4681 / CBS 112371) (Trichophyton mentagrophytes).